A 1068-amino-acid chain; its full sequence is Carbamoyl phosphate synthase large chain (1068 aa).

Residues 1 to 401 (MPRRTDLHRI…SLLKAVRSLE (401 aa)) are carboxyphosphate synthetic domain. Positions 129, 169, 175, 176, 208, 210, 215, 241, 242, 243, 284, and 298 each coordinate ATP. The ATP-grasp 1 domain maps to 133–327 (KQLMDELGQP…IAKIAAKIAV (195 aa)). Residues Q284, E298, and N300 each contribute to the Mg(2+) site. Mn(2+) contacts are provided by Q284, E298, and N300. An oligomerization domain region spans residues 402–546 (IGVDHLALRE…YSTYEMENES (145 aa)). Residues 547-935 (KKSQRPSVLV…ALYKVFEAAN (389 aa)) are carbamoyl phosphate synthetic domain. The region spanning 671 to 867 (ESLLAELGIP…MAEVATRIIL (197 aa)) is the ATP-grasp 2 domain. ATP-binding residues include R707, R746, L748, E752, G777, V778, H779, S780, Q820, and E838. The Mg(2+) site is built by Q820, E838, and N840. Mn(2+) is bound by residues Q820, E838, and N840. Residues 936-1068 (LHVPEYGKIL…ESRVFSTESI (133 aa)) enclose the MGS-like domain. Residues 936 to 1068 (LHVPEYGKIL…ESRVFSTESI (133 aa)) are allosteric domain.

This sequence belongs to the CarB family. Composed of two chains; the small (or glutamine) chain promotes the hydrolysis of glutamine to ammonia, which is used by the large (or ammonia) chain to synthesize carbamoyl phosphate. Tetramer of heterodimers (alpha,beta)4. Requires Mg(2+) as cofactor. The cofactor is Mn(2+).

It carries out the reaction hydrogencarbonate + L-glutamine + 2 ATP + H2O = carbamoyl phosphate + L-glutamate + 2 ADP + phosphate + 2 H(+). The catalysed reaction is hydrogencarbonate + NH4(+) + 2 ATP = carbamoyl phosphate + 2 ADP + phosphate + 2 H(+). It participates in amino-acid biosynthesis; L-arginine biosynthesis; carbamoyl phosphate from bicarbonate: step 1/1. The protein operates within pyrimidine metabolism; UMP biosynthesis via de novo pathway; (S)-dihydroorotate from bicarbonate: step 1/3. Large subunit of the glutamine-dependent carbamoyl phosphate synthetase (CPSase). CPSase catalyzes the formation of carbamoyl phosphate from the ammonia moiety of glutamine, carbonate, and phosphate donated by ATP, constituting the first step of 2 biosynthetic pathways, one leading to arginine and/or urea and the other to pyrimidine nucleotides. The large subunit (synthetase) binds the substrates ammonia (free or transferred from glutamine from the small subunit), hydrogencarbonate and ATP and carries out an ATP-coupled ligase reaction, activating hydrogencarbonate by forming carboxy phosphate which reacts with ammonia to form carbamoyl phosphate. The polypeptide is Carbamoyl phosphate synthase large chain (Cutibacterium acnes (strain DSM 16379 / KPA171202) (Propionibacterium acnes)).